A 346-amino-acid polypeptide reads, in one-letter code: Galanin receptor type 1 (346 aa).

Residues 1–33 (MELAPVNLSEGNGSDPEPPAEPRPLFGIGVENF) are Extracellular-facing. Asn-7 and Asn-12 each carry an N-linked (GlcNAc...) asparagine glycan. A helical transmembrane segment spans residues 34–54 (ITLVVFGLIFAMGVLGNSLVI). The Cytoplasmic portion of the chain corresponds to 55–69 (TVLARSKPGKPRSTT). A helical transmembrane segment spans residues 70–90 (NLFILNLSIADLAYLLFCIPF). Residues 91–108 (QATVYALPTWVLGAFICK) are Extracellular-facing. An intrachain disulfide couples Cys-107 to Cys-185. The helical transmembrane segment at 109–130 (FIHYFFTVSMLVSIFTLAAMSV) threads the bilayer. The Cytoplasmic portion of the chain corresponds to 131-150 (DRYVAIVHSRRSSSLRVSRN). The helical transmembrane segment at 151–171 (ALLGVGFIWALSIAMASPVAY) threads the bilayer. The Extracellular segment spans residues 172 to 196 (YQRLFHRDSNQTFCWEHWPNQLHKK). An N-linked (GlcNAc...) asparagine glycan is attached at Asn-181. Residues 197–217 (AYVVCTFVFGYLLPLLLICFC) form a helical membrane-spanning segment. Residues 218–246 (YAKVLNHLHKKLKNMSKKSEASKKKTAQT) are Cytoplasmic-facing. Residues 247–267 (VLVVVVVFGISWLPHHVIHLW) form a helical membrane-spanning segment. Residues 268-269 (AE) are Extracellular-facing. Residues 270-290 (FGAFPLTPASFFFRITAHCLA) traverse the membrane as a helical segment. Residues 291–346 (YSNSSVNPIIYAFLSENFRKAYKQVFKCRVCNESPHGDAKEKNRIDTPPSTNCTHV) are Cytoplasmic-facing. Cys-318 carries S-palmitoyl cysteine lipidation. A compositionally biased stretch (basic and acidic residues) spans 326–335 (HGDAKEKNRI). Positions 326 to 346 (HGDAKEKNRIDTPPSTNCTHV) are disordered.

Belongs to the G-protein coupled receptor 1 family. As to quaternary structure, interacts with GRP39 AND HTR1A. Three cysteine residues are found in the C-terminus, at least one of which may be palmitoylated. Spinal cord, small intestine, Rin14B insulinoma cells and several brain regions, particularly ventral hippocampus, amygdala, supraoptic nucleus, hypothalamus, thalamus, lateral parabrachial nucleus and locus coeruleus.

The protein localises to the cell membrane. Its function is as follows. Receptor for the hormone galanin. The activity of this receptor is mediated by G proteins that inhibit adenylate cyclase activity. The polypeptide is Galanin receptor type 1 (Galr1) (Rattus norvegicus (Rat)).